The following is a 207-amino-acid chain: Nitrile hydratase subunit alpha (207 aa).

4 residues coordinate Fe(3+): cysteine 110, cysteine 113, serine 114, and cysteine 115. Cysteine 113 carries the post-translational modification Cysteine sulfinic acid (-SO2H). Cysteine 115 is subject to Cysteine sulfenic acid (-SOH).

The protein belongs to the nitrile hydratase subunit alpha family. In terms of assembly, heterodimer of an alpha and a beta chain. Requires Fe(3+) as cofactor. In terms of processing, oxidation on Cys-113 is essential for the activity. Oxidation on Cys-115 stabilizes the Fe-NO ligand coordinated in the inactive form.

It catalyses the reaction an aliphatic primary amide = an aliphatic nitrile + H2O. With respect to regulation, inactivated by nitrosylation of the iron center in the dark and activated by photo-induced nitric oxide (NO) release. Inactivated by oxidation of Cys-115 to a sulfenic acid. Functionally, NHase catalyzes the hydration of various nitrile compounds to the corresponding amides. Industrial production of acrylamide is now being developed using some of the enzymes of this class. The protein is Nitrile hydratase subunit alpha (nthA) of Rhodococcus erythropolis (Arthrobacter picolinophilus).